Consider the following 34-residue polypeptide: Somatostatin (34 aa).

The segment at 1 to 20 (AVERPRQDGQVHEPPGRERK) is disordered. A disulfide bridge links C23 with C34.

The protein belongs to the somatostatin family.

The protein localises to the secreted. In terms of biological role, somatostatin inhibits the release of somatotropin. This Myxine glutinosa (Atlantic hagfish) protein is Somatostatin (sst).